The following is a 137-amino-acid chain: Nucleoside diphosphate kinase (137 aa).

Residues K9, F57, R85, T91, R102, and N112 each coordinate ATP. H115 functions as the Pros-phosphohistidine intermediate in the catalytic mechanism.

Belongs to the NDK family. In terms of assembly, homotetramer. It depends on Mg(2+) as a cofactor.

The protein resides in the cytoplasm. The catalysed reaction is a 2'-deoxyribonucleoside 5'-diphosphate + ATP = a 2'-deoxyribonucleoside 5'-triphosphate + ADP. It catalyses the reaction a ribonucleoside 5'-diphosphate + ATP = a ribonucleoside 5'-triphosphate + ADP. Its function is as follows. Major role in the synthesis of nucleoside triphosphates other than ATP. The ATP gamma phosphate is transferred to the NDP beta phosphate via a ping-pong mechanism, using a phosphorylated active-site intermediate. The polypeptide is Nucleoside diphosphate kinase (Campylobacter jejuni subsp. jejuni serotype O:6 (strain 81116 / NCTC 11828)).